Consider the following 614-residue polypeptide: Glutamyl-tRNA(Gln) amidotransferase subunit E (614 aa).

Belongs to the GatB/GatE family. GatE subfamily. Heterodimer of GatD and GatE.

It catalyses the reaction L-glutamyl-tRNA(Gln) + L-glutamine + ATP + H2O = L-glutaminyl-tRNA(Gln) + L-glutamate + ADP + phosphate + H(+). Its function is as follows. Allows the formation of correctly charged Gln-tRNA(Gln) through the transamidation of misacylated Glu-tRNA(Gln) in organisms which lack glutaminyl-tRNA synthetase. The reaction takes place in the presence of glutamine and ATP through an activated gamma-phospho-Glu-tRNA(Gln). The GatDE system is specific for glutamate and does not act on aspartate. In Methanospirillum hungatei JF-1 (strain ATCC 27890 / DSM 864 / NBRC 100397 / JF-1), this protein is Glutamyl-tRNA(Gln) amidotransferase subunit E.